A 459-amino-acid chain; its full sequence is Serine protease HTRA3 (459 aa).

The first 23 residues, 1–23 (MQARALLPATLAILATLAVLALA), serve as a signal peptide directing secretion. One can recognise an IGFBP N-terminal domain in the interval 27-90 (PAAPCPARCD…ECVRGVCRCR (64 aa)). Cystine bridges form between Cys31–Cys54, Cys35–Cys56, Cys40–Cys57, Cys45–Cys60, Cys68–Cys82, Cys76–Cys87, Cys89–Cys107, and Cys96–Cys132. Residues 76-134 (CGDSLECVRGVCRCRWTHTVCGTDGHTYADVCALQAASRRALQVSGTPVRQLQKGACPS) form the Kazal-like domain. The interval 181–347 (GSGFIMSEAG…IPSDRITRFL (167 aa)) is serine protease. Active-site charge relay system residues include His197, Asp233, and Ser311. The PDZ domain maps to 365 to 450 (IRMRTITPSL…EVRRGNDDLL (86 aa)).

This sequence belongs to the peptidase S1C family. In terms of assembly, homotrimer. Interacts with MYH9. Interacts with TGFB1; the interaction inhibits TGFB-mediated signaling. Interacts with BMP4; the interaction inhibits BMP4-mediated signaling. Interacts with TGFB2 and GDF5. In terms of tissue distribution, highest level of isoform 1 in maternal part of the placenta, moderate level in heart, testis and ovary, low level in muscle and lung. High expression found in granulosa cells of the ovary. Expressed in bone matrix, particularly in articular chondrocytes. Very low level of isoform 2 expressed in placenta. Expressed in the bone matrix, particularly in articular chondrocytes.

The protein localises to the secreted. Its function is as follows. Serine protease that cleaves beta-casein/CSN2 as well as several extracellular matrix (ECM) proteoglycans such as decorin/DCN, biglycan/BGN and fibronectin/FN1. Inhibits signaling mediated by TGF-beta family proteins possibly indirectly by degradation of these ECM proteoglycans. May act as a tumor suppressor. Negatively regulates, in vitro, trophoblast invasion during placental development and may be involved in the development of the placenta in vivo. May also have a role in ovarian development, granulosa cell differentiation and luteinization. This Mus musculus (Mouse) protein is Serine protease HTRA3 (Htra3).